The following is a 234-amino-acid chain: UPF0173 metal-dependent hydrolase Msp_0516 (234 aa).

This sequence belongs to the UPF0173 family.

This chain is UPF0173 metal-dependent hydrolase Msp_0516, found in Methanosphaera stadtmanae (strain ATCC 43021 / DSM 3091 / JCM 11832 / MCB-3).